Reading from the N-terminus, the 644-residue chain is Transcription factor btd (644 aa).

Disordered stretches follow at residues 16 to 65 (HQAQ…TQQQ) and 101 to 196 (APPS…AGSP). 2 stretches are compositionally biased toward low complexity: residues 101-119 (APPSLSGSSSGSSSGSSPL) and 140-196 (ASPN…AGSP). 3 C2H2-type zinc fingers span residues 333–357 (HICHIPGCERLYGKASHLKTHLRWH), 363–385 (FLCLTCGKRFSRSDELQRHGRTH), and 391–413 (YACPICSKKFSRSDHLSKHKKTH). Disordered regions lie at residues 437 to 461 (LEKKEKKSGKPLTPPVEFKQEQPDT) and 478 to 537 (TSAG…SSSA). Composition is skewed to low complexity over residues 499-508 (TTTTSSAAAS) and 521-537 (AIQPATTSASSSSSSSA).

It localises to the nucleus. Its function is as follows. Required for the development of the antennal, intercalary and mandibular segments of the head. The protein is Transcription factor btd (btd) of Drosophila melanogaster (Fruit fly).